The following is a 397-amino-acid chain: 2,6-dihydroxypyridine 3-monooxygenase (397 aa).

FAD-binding positions include 14–16 (SIS), 35–36 (ER), valine 49, leucine 120, aspartate 306, and 316–320 (AAGGA).

As to quaternary structure, homodimer. The cofactor is FAD.

It carries out the reaction 2,6-dihydroxypyridine + NADH + O2 + H(+) = 2,3,6-trihydroxypyridine + NAD(+) + H2O. The protein operates within alkaloid degradation; nicotine degradation. Catalyzes the conversion of 2,6-dihydroxypyridine into 2,3,6-trihydroxypyridine in the nicotine degradation pathway. This chain is 2,6-dihydroxypyridine 3-monooxygenase (dhpH), found in Paenarthrobacter nicotinovorans (Arthrobacter nicotinovorans).